We begin with the raw amino-acid sequence, 154 residues long: Glycosylation-dependent cell adhesion molecule 1 (154 aa).

Positions 1 to 18 (MKFLCILLLASLAATSLA) are cleaved as a signal peptide. Residue T34 is glycosylated (O-linked (GalNAc...) threonine; partial). Phosphoserine occurs at positions 48, 53, 57, 59, and 65. Positions 51-65 (DLSKEPSISREDLIS) are enriched in basic and acidic residues. Residues 51 to 115 (DLSKEPSISR…EHAPSDASTT (65 aa)) are disordered. N-linked (GlcNAc...) asparagine glycosylation occurs at N96.

This sequence belongs to the PP3/GlyCAM-1 family. In terms of tissue distribution, highly and specifically expressed in the lactating mammary gland.

The protein resides in the membrane. The protein is Glycosylation-dependent cell adhesion molecule 1 (GLYCAM1) of Capra hircus (Goat).